An 81-amino-acid polypeptide reads, in one-letter code: DNA-directed RNA polymerase subunit Rpo6 (81 aa).

It belongs to the archaeal Rpo6/eukaryotic RPB6 RNA polymerase subunit family. As to quaternary structure, part of the RNA polymerase complex.

The protein localises to the cytoplasm. It catalyses the reaction RNA(n) + a ribonucleoside 5'-triphosphate = RNA(n+1) + diphosphate. In terms of biological role, DNA-dependent RNA polymerase (RNAP) catalyzes the transcription of DNA into RNA using the four ribonucleoside triphosphates as substrates. This is DNA-directed RNA polymerase subunit Rpo6 from Thermofilum pendens (strain DSM 2475 / Hrk 5).